Reading from the N-terminus, the 480-residue chain is Argininosuccinate lyase (480 aa).

The tract at residues 1-20 (MTQQDGGQAGQAEPTKLWGG) is disordered.

Belongs to the lyase 1 family. Argininosuccinate lyase subfamily.

It is found in the cytoplasm. It catalyses the reaction 2-(N(omega)-L-arginino)succinate = fumarate + L-arginine. Its pathway is amino-acid biosynthesis; L-arginine biosynthesis; L-arginine from L-ornithine and carbamoyl phosphate: step 3/3. The sequence is that of Argininosuccinate lyase from Saccharopolyspora erythraea (strain ATCC 11635 / DSM 40517 / JCM 4748 / NBRC 13426 / NCIMB 8594 / NRRL 2338).